Here is a 130-residue protein sequence, read N- to C-terminus: Putative F-box protein At1g77880 (130 aa).

The 47-residue stretch at 18–64 (KVSIPYLPDDLLLNCLARISRLYYPTLSLVSKRFRSLLASTELYETR) folds into the F-box domain.

In Arabidopsis thaliana (Mouse-ear cress), this protein is Putative F-box protein At1g77880.